The chain runs to 83 residues: UPF0297 protein Moth_1643 (83 aa).

Belongs to the UPF0297 family.

The polypeptide is UPF0297 protein Moth_1643 (Moorella thermoacetica (strain ATCC 39073 / JCM 9320)).